A 510-amino-acid polypeptide reads, in one-letter code: NADP-dependent fatty aldehyde dehydrogenase (510 aa).

229 to 234 (GSVGGG) is an NADP(+) binding site. Catalysis depends on residues glutamate 253 and cysteine 289.

Belongs to the aldehyde dehydrogenase family. Homodimer.

The catalysed reaction is an aldehyde + NADP(+) + H2O = a carboxylate + NADPH + 2 H(+). Its function is as follows. Catalyzes the oxidation of long-chain aliphatic aldehydes to acids. May be implicated in controlling luminescence as it catalyzes the oxidation of the fatty aldehyde substrate for the light-emitting reaction. This Vibrio harveyi (Beneckea harveyi) protein is NADP-dependent fatty aldehyde dehydrogenase (aldH).